Reading from the N-terminus, the 940-residue chain is Phagocyte signaling-impaired protein (940 aa).

The stretch at 77–110 (STTLHVMTLCYKETDQLDKICQIFTSASKQLPGN) is one TPR repeat.

It belongs to the MDM20/NAA25 family. In terms of assembly, component of the N-terminal acetyltransferase B (NatB) complex.

The protein resides in the lysosome. In terms of biological role, non-catalytic subunit of the NatB complex which catalyzes acetylation of the N-terminal methionine residues of proteins beginning with Met-Asp or Met-Glu. Has 2 roles in the larval immune response: required both for the phagocytic degradation of internalized bacteria and for the induction of Defensin in the fat body. Within the phagocytic blood cells, has a role in detection of infection and activation of the humoral immune response. This Aedes aegypti (Yellowfever mosquito) protein is Phagocyte signaling-impaired protein.